The following is a 93-amino-acid chain: Co-chaperonin GroES (93 aa).

It belongs to the GroES chaperonin family. In terms of assembly, heptamer of 7 subunits arranged in a ring. Interacts with the chaperonin GroEL.

Its subcellular location is the cytoplasm. Its function is as follows. Together with the chaperonin GroEL, plays an essential role in assisting protein folding. The GroEL-GroES system forms a nano-cage that allows encapsulation of the non-native substrate proteins and provides a physical environment optimized to promote and accelerate protein folding. GroES binds to the apical surface of the GroEL ring, thereby capping the opening of the GroEL channel. This chain is Co-chaperonin GroES, found in Streptococcus sanguinis.